We begin with the raw amino-acid sequence, 456 residues long: MARRAREEEADQVERKLVLGRYELGRLLGQGTFAKVYYGRDLRSGESVAIKVIDKARLRRTEGMVEQLRREISIMRMVRHPNVVGIREVLASRARVFVVMEYARGGELFAKVARGRLTEEHARRYFQQLVAAVGFCHGRGVAHRDLKPENLLLDEEGRLKVTDFGLAALPEQLRQDGLLHTQCGTPAYVAPEVLRKRGYDGARADLWSCGVVLYVLLCGFLPFQHENYAKMYQKIFKAEYQVPPWVSGDARRLIVRLLVVDPAKRISIPEIMRTPWFKKGFVPPVPTSPVSPKKWEEDDVLLDGGDSGAMSPRTCNAFQLISSMSSGFDLSGMFESEQKAATVFTSRAPAATVIQKLEAVGRSLGYSATRGKGWKLRLEATADGANGRLAVTVEALEVAADVAVVEFAHDAGDELEFNKFCAVDVRPGLADIVWAWQGDRPAAPDVAAATVECSPA.

Residues 22-277 (YELGRLLGQG…IPEIMRTPWF (256 aa)) enclose the Protein kinase domain. Residues 28-36 (LGQGTFAKV) and Lys-51 contribute to the ATP site. The Proton acceptor role is filled by Asp-145. The tract at residues 163–192 (DFGLAALPEQLRQDGLLHTQCGTPAYVAPE) is activation loop. An NAF domain is found at 309 to 335 (AMSPRTCNAFQLISSMSSGFDLSGMFE). Positions 339 to 368 (KAATVFTSRAPAATVIQKLEAVGRSLGYSA) are PPI.

Belongs to the protein kinase superfamily. CAMK Ser/Thr protein kinase family. SNF1 subfamily. Mn(2+) is required as a cofactor.

It catalyses the reaction L-seryl-[protein] + ATP = O-phospho-L-seryl-[protein] + ADP + H(+). The catalysed reaction is L-threonyl-[protein] + ATP = O-phospho-L-threonyl-[protein] + ADP + H(+). Its function is as follows. CIPK serine-threonine protein kinases interact with CBL proteins. Binding of a CBL protein to the regulatory NAF domain of CIPK protein lead to the activation of the kinase in a calcium-dependent manner. The chain is CBL-interacting protein kinase 16 (CIPK16) from Oryza sativa subsp. japonica (Rice).